Reading from the N-terminus, the 182-residue chain is Transcription termination/antitermination protein NusG (182 aa).

Belongs to the NusG family.

Functionally, participates in transcription elongation, termination and antitermination. This is Transcription termination/antitermination protein NusG from Chlamydia trachomatis serovar D (strain ATCC VR-885 / DSM 19411 / UW-3/Cx).